The chain runs to 455 residues: Chromosomal replication initiator protein DnaA (455 aa).

Positions 1–70 (MTNETWVQVR…RMRLTEAGSP (70 aa)) are domain I, interacts with DnaA modulators. Residues 70–113 (PVERLEFAVSNTPRAPLKEVKAAAPAASPARARPAPPEEDLRGA) are domain II. The segment at 87–109 (KEVKAAAPAASPARARPAPPEED) is disordered. The segment covering 91–102 (AAAPAASPARAR) has biased composition (low complexity). Residues 114–335 (PLDARFTFDS…GALTRLFAFA (222 aa)) form a domain III, AAA+ region region. Residues G158, G160, K161, and T162 each coordinate ATP. The domain IV, binds dsDNA stretch occupies residues 336-455 (SLVGREITLD…LQLLRRLLQA (120 aa)).

Belongs to the DnaA family. As to quaternary structure, oligomerizes as a right-handed, spiral filament on DNA at oriC.

The protein localises to the cytoplasm. Its function is as follows. Plays an essential role in the initiation and regulation of chromosomal replication. ATP-DnaA binds to the origin of replication (oriC) to initiate formation of the DNA replication initiation complex once per cell cycle. Binds the DnaA box (a 9 base pair repeat at the origin) and separates the double-stranded (ds)DNA. Forms a right-handed helical filament on oriC DNA; dsDNA binds to the exterior of the filament while single-stranded (ss)DNA is stabiized in the filament's interior. The ATP-DnaA-oriC complex binds and stabilizes one strand of the AT-rich DNA unwinding element (DUE), permitting loading of DNA polymerase. After initiation quickly degrades to an ADP-DnaA complex that is not apt for DNA replication. Binds acidic phospholipids. This is Chromosomal replication initiator protein DnaA from Cereibacter sphaeroides (strain ATCC 17029 / ATH 2.4.9) (Rhodobacter sphaeroides).